Here is a 273-residue protein sequence, read N- to C-terminus: Flagellin FljK (273 aa).

It belongs to the bacterial flagellin family. In terms of assembly, in C.crescentus, the flagellar filament is composed of multiple flagellins of 29 kDa; 27 kDa and 25 kDa.

The protein resides in the secreted. Its subcellular location is the bacterial flagellum. Functionally, flagellin is the subunit protein which polymerizes to form the filaments of bacterial flagella. This chain is Flagellin FljK (fljK), found in Caulobacter vibrioides (strain ATCC 19089 / CIP 103742 / CB 15) (Caulobacter crescentus).